A 388-amino-acid polypeptide reads, in one-letter code: Norsolorinic acid reductase (388 aa).

The Proton donor role is filled by Y74. 233-243 (GVLGRGQFRSA) provides a ligand contact to NADP(+).

This sequence belongs to the aldo/keto reductase family. Aldo/keto reductase 2 subfamily.

It participates in mycotoxin biosynthesis; aflatoxin biosynthesis. In Aspergillus flavus (strain ATCC 200026 / FGSC A1120 / IAM 13836 / NRRL 3357 / JCM 12722 / SRRC 167), this protein is Norsolorinic acid reductase (norA).